The following is a 297-amino-acid chain: Homoserine kinase (297 aa).

An ATP-binding site is contributed by 82–92 (PLTRGLGSSAS).

Belongs to the GHMP kinase family. Homoserine kinase subfamily.

Its subcellular location is the cytoplasm. The enzyme catalyses L-homoserine + ATP = O-phospho-L-homoserine + ADP + H(+). It participates in amino-acid biosynthesis; L-threonine biosynthesis; L-threonine from L-aspartate: step 4/5. Catalyzes the ATP-dependent phosphorylation of L-homoserine to L-homoserine phosphate. This chain is Homoserine kinase, found in Bacillus anthracis (strain CDC 684 / NRRL 3495).